The sequence spans 440 residues: Adenosylhomocysteinase (440 aa).

Substrate-binding residues include threonine 47, aspartate 123, and glutamate 148. Threonine 149–threonine 151 is an NAD(+) binding site. 2 residues coordinate substrate: lysine 178 and aspartate 182. NAD(+) is bound by residues asparagine 183, glycine 228–glycine 233, glutamate 251, isoleucine 307–histidine 309, and asparagine 354.

Belongs to the adenosylhomocysteinase family. NAD(+) serves as cofactor.

It carries out the reaction S-adenosyl-L-homocysteine + H2O = L-homocysteine + adenosine. It participates in amino-acid biosynthesis; L-homocysteine biosynthesis; L-homocysteine from S-adenosyl-L-homocysteine: step 1/1. Functionally, adenosylhomocysteine is a competitive inhibitor of S-adenosyl-L-methionine-dependent methyl transferase reactions; therefore adenosylhomocysteinase may play a key role in the control of methylations via regulation of the intracellular concentration of adenosylhomocysteine. This chain is Adenosylhomocysteinase (SAHH), found in Pneumocystis carinii.